Here is a 755-residue protein sequence, read N- to C-terminus: Oligopeptide transporter 1 (755 aa).

13 helical membrane-spanning segments follow: residues 58-78 (TWTL…FFGF), 82-102 (QLWV…KLMA), 134-154 (ITIF…ITIV), 165-185 (AAAM…AGIF), 226-246 (FFII…YLFP), 298-318 (FFAI…VLPI), 370-390 (YLSV…CATI), 434-454 (WWFI…CEGF), 462-482 (WWGL…IGVI), 546-566 (FIVQ…TTWW), 614-634 (GIYP…VPFW), 664-684 (AKAV…YYIF), and 697-717 (ILSA…FFAF).

Belongs to the oligopeptide OPT transporter (TC 2.A.67.1) family. As to expression, highly expressed in flowers, and moderately expressed in leaves and stems.

Its subcellular location is the membrane. Its function is as follows. Involved in the translocation of tetra- and pentapeptides across the cellular membrane in an energy-dependent manner. The protein is Oligopeptide transporter 1 (OPT1) of Arabidopsis thaliana (Mouse-ear cress).